The primary structure comprises 213 residues: Large ribosomal subunit protein uL3 (213 aa).

The residue at position 151 (Gln151) is an N5-methylglutamine.

Belongs to the universal ribosomal protein uL3 family. In terms of assembly, part of the 50S ribosomal subunit. Forms a cluster with proteins L14 and L19. Post-translationally, methylated by PrmB.

Functionally, one of the primary rRNA binding proteins, it binds directly near the 3'-end of the 23S rRNA, where it nucleates assembly of the 50S subunit. The chain is Large ribosomal subunit protein uL3 from Rhizobium johnstonii (strain DSM 114642 / LMG 32736 / 3841) (Rhizobium leguminosarum bv. viciae).